Here is a 178-residue protein sequence, read N- to C-terminus: Stathmin-2-B (178 aa).

The region spanning 38-178 (DDMEVKQLNK…KNKEQLELSG (141 aa)) is the SLD domain. Residues 75–178 (KRKDVSLEEI…KNKEQLELSG (104 aa)) adopt a coiled-coil conformation.

Belongs to the stathmin family. Nervous tissue.

The protein resides in the cytoplasm. It is found in the membrane. The protein localises to the cell projection. Its subcellular location is the lamellipodium. The chain is Stathmin-2-B (stmn2-b) from Xenopus laevis (African clawed frog).